Here is a 369-residue protein sequence, read N- to C-terminus: Glutamate 5-kinase (369 aa).

Lysine 9 serves as a coordination point for ATP. Positions 49, 136, and 148 each coordinate substrate. Residues 168 to 169 (TD) and 210 to 216 (TGGMLTK) contribute to the ATP site. The PUA domain maps to 275–355 (QGEIYVDQGA…KGVVIHRDDW (81 aa)).

The protein belongs to the glutamate 5-kinase family.

The protein localises to the cytoplasm. It catalyses the reaction L-glutamate + ATP = L-glutamyl 5-phosphate + ADP. It participates in amino-acid biosynthesis; L-proline biosynthesis; L-glutamate 5-semialdehyde from L-glutamate: step 1/2. Catalyzes the transfer of a phosphate group to glutamate to form L-glutamate 5-phosphate. In Streptococcus sanguinis (strain SK36), this protein is Glutamate 5-kinase.